Consider the following 274-residue polypeptide: Diaminopimelate epimerase (274 aa).

Positions 11 and 65 each coordinate substrate. Residue Cys74 is the Proton donor of the active site. Substrate is bound by residues 75–76 (GN), Asn158, Asn191, and 209–210 (ER). Catalysis depends on Cys218, which acts as the Proton acceptor. A substrate-binding site is contributed by 219–220 (GT).

It belongs to the diaminopimelate epimerase family. In terms of assembly, homodimer.

The protein resides in the cytoplasm. It catalyses the reaction (2S,6S)-2,6-diaminopimelate = meso-2,6-diaminopimelate. Its pathway is amino-acid biosynthesis; L-lysine biosynthesis via DAP pathway; DL-2,6-diaminopimelate from LL-2,6-diaminopimelate: step 1/1. Its function is as follows. Catalyzes the stereoinversion of LL-2,6-diaminopimelate (L,L-DAP) to meso-diaminopimelate (meso-DAP), a precursor of L-lysine and an essential component of the bacterial peptidoglycan. The polypeptide is Diaminopimelate epimerase (Carboxydothermus hydrogenoformans (strain ATCC BAA-161 / DSM 6008 / Z-2901)).